Here is a 203-residue protein sequence, read N- to C-terminus: Small ribosomal subunit protein uS5 (203 aa).

Positions 1–25 (MPGRTRRDGGSESGGKDRRDRRDGG) are enriched in basic and acidic residues. The disordered stretch occupies residues 1–36 (MPGRTRRDGGSESGGKDRRDRRDGGRGGAAQEKTPQ). An S5 DRBM domain is found at 36-99 (QFERVVTINR…EEAKKNFFRV (64 aa)).

The protein belongs to the universal ribosomal protein uS5 family. Part of the 30S ribosomal subunit. Contacts proteins S4 and S8.

Functionally, with S4 and S12 plays an important role in translational accuracy. Its function is as follows. Located at the back of the 30S subunit body where it stabilizes the conformation of the head with respect to the body. This chain is Small ribosomal subunit protein uS5, found in Saccharopolyspora erythraea (strain ATCC 11635 / DSM 40517 / JCM 4748 / NBRC 13426 / NCIMB 8594 / NRRL 2338).